Reading from the N-terminus, the 138-residue chain is Proline-rich protein 34 (138 aa).

A compositionally biased stretch (pro residues) spans 22-37; that stretch reads SAPTSPPNPATRPAPG. 2 disordered regions span residues 22 to 55 and 81 to 107; these read SAPTSPPNPATRPAPGPGRRARCPQSAHPAPTRG and APRLPHPAARARRRAWHGARLPGSPAR.

This is Proline-rich protein 34 (PRR34) from Homo sapiens (Human).